The following is a 245-amino-acid chain: 1-(5-phosphoribosyl)-5-[(5-phosphoribosylamino)methylideneamino] imidazole-4-carboxamide isomerase (245 aa).

Asp-8 serves as the catalytic Proton acceptor. Residue Asp-129 is the Proton donor of the active site.

It belongs to the HisA/HisF family.

Its subcellular location is the cytoplasm. The catalysed reaction is 1-(5-phospho-beta-D-ribosyl)-5-[(5-phospho-beta-D-ribosylamino)methylideneamino]imidazole-4-carboxamide = 5-[(5-phospho-1-deoxy-D-ribulos-1-ylimino)methylamino]-1-(5-phospho-beta-D-ribosyl)imidazole-4-carboxamide. It participates in amino-acid biosynthesis; L-histidine biosynthesis; L-histidine from 5-phospho-alpha-D-ribose 1-diphosphate: step 4/9. This chain is 1-(5-phosphoribosyl)-5-[(5-phosphoribosylamino)methylideneamino] imidazole-4-carboxamide isomerase, found in Geotalea daltonii (strain DSM 22248 / JCM 15807 / FRC-32) (Geobacter daltonii).